The sequence spans 147 residues: Cyanate hydratase (147 aa).

Catalysis depends on residues Arg88, Glu91, and Ser114.

The protein belongs to the cyanase family.

It catalyses the reaction cyanate + hydrogencarbonate + 3 H(+) = NH4(+) + 2 CO2. Its function is as follows. Catalyzes the reaction of cyanate with bicarbonate to produce ammonia and carbon dioxide. This chain is Cyanate hydratase, found in Acaryochloris marina (strain MBIC 11017).